The chain runs to 200 residues: Somatotropin (200 aa).

An N-terminal signal peptide occupies residues 1–22 (MARVLVLLSVVVASLLFSQGAT). Histidine 38 serves as a coordination point for Zn(2+). A disulfide bond links cysteine 71 and cysteine 173. A Zn(2+)-binding site is contributed by glutamate 182. A disulfide bridge links cysteine 190 with cysteine 198.

Belongs to the somatotropin/prolactin family.

It is found in the secreted. Functionally, growth hormone plays an important role in growth control and is involved in the regulation of several anabolic processes. Implicated as an osmoregulatory substance important for seawater adaptation. This is Somatotropin (gh) from Ictalurus punctatus (Channel catfish).